The primary structure comprises 338 residues: Ketol-acid reductoisomerase (NADP(+)) (338 aa).

One can recognise a KARI N-terminal Rossmann domain in the interval 3 to 183 (IELLYDADAD…GGARAGVIPT (181 aa)). Residues 26 to 29 (YGSQ), arginine 49, serine 52, serine 54, and 84 to 87 (DTSQ) each bind NADP(+). Histidine 109 is an active-site residue. Glycine 135 contacts NADP(+). Residues 184–329 (TFEAETVTDL…AKLRDLMSWV (146 aa)) enclose the KARI C-terminal knotted domain. Mg(2+) contacts are provided by aspartate 192, glutamate 196, glutamate 228, and glutamate 232. A substrate-binding site is contributed by serine 253.

Belongs to the ketol-acid reductoisomerase family. It depends on Mg(2+) as a cofactor.

It catalyses the reaction (2R)-2,3-dihydroxy-3-methylbutanoate + NADP(+) = (2S)-2-acetolactate + NADPH + H(+). It carries out the reaction (2R,3R)-2,3-dihydroxy-3-methylpentanoate + NADP(+) = (S)-2-ethyl-2-hydroxy-3-oxobutanoate + NADPH + H(+). Its pathway is amino-acid biosynthesis; L-isoleucine biosynthesis; L-isoleucine from 2-oxobutanoate: step 2/4. It functions in the pathway amino-acid biosynthesis; L-valine biosynthesis; L-valine from pyruvate: step 2/4. Involved in the biosynthesis of branched-chain amino acids (BCAA). Catalyzes an alkyl-migration followed by a ketol-acid reduction of (S)-2-acetolactate (S2AL) to yield (R)-2,3-dihydroxy-isovalerate. In the isomerase reaction, S2AL is rearranged via a Mg-dependent methyl migration to produce 3-hydroxy-3-methyl-2-ketobutyrate (HMKB). In the reductase reaction, this 2-ketoacid undergoes a metal-dependent reduction by NADPH to yield (R)-2,3-dihydroxy-isovalerate. The sequence is that of Ketol-acid reductoisomerase (NADP(+)) from Corynebacterium glutamicum (strain ATCC 13032 / DSM 20300 / JCM 1318 / BCRC 11384 / CCUG 27702 / LMG 3730 / NBRC 12168 / NCIMB 10025 / NRRL B-2784 / 534).